The chain runs to 204 residues: Protein GrpE (204 aa).

Positions 1 to 52 (MSSKNNPESETKAKNKWEKVMEAEEEQEEGGGDGSQEMEPHREGLEFPSREK) are disordered. Composition is skewed to basic and acidic residues over residues 7–22 (PESE…KVME) and 38–52 (MEPH…SREK).

It belongs to the GrpE family. Homodimer.

It localises to the cytoplasm. Functionally, participates actively in the response to hyperosmotic and heat shock by preventing the aggregation of stress-denatured proteins, in association with DnaK and GrpE. It is the nucleotide exchange factor for DnaK and may function as a thermosensor. Unfolded proteins bind initially to DnaJ; upon interaction with the DnaJ-bound protein, DnaK hydrolyzes its bound ATP, resulting in the formation of a stable complex. GrpE releases ADP from DnaK; ATP binding to DnaK triggers the release of the substrate protein, thus completing the reaction cycle. Several rounds of ATP-dependent interactions between DnaJ, DnaK and GrpE are required for fully efficient folding. The chain is Protein GrpE from Coxiella burnetii (strain Dugway 5J108-111).